The primary structure comprises 495 residues: Internal alternative NAD(P)H-ubiquinone oxidoreductase A1, mitochondrial (495 aa).

The transit peptide at 1–41 (MPWFKNLIKISKTITNQSSSYKSITPLASPLLTQFLQFTKQ) directs the protein to the mitochondrion. An FAD-binding site is contributed by 61–91 (RIVVLGSGWAGCRLMKDIDTNIYDVVCVSPR). 228–264 (LHCVVVGGGPTGVEFSGELSDFILKDVHQRYAHVKDY) is a binding site for NAD(+). Positions 486–495 (LVFGRDISRI) match the Microbody targeting signal motif.

Belongs to the NADH dehydrogenase family. FAD is required as a cofactor.

It is found in the mitochondrion inner membrane. The protein localises to the peroxisome. The catalysed reaction is a quinone + NADH + H(+) = a quinol + NAD(+). It carries out the reaction a ubiquinone + NADH + H(+) = a ubiquinol + NAD(+). In terms of biological role, alternative NADH-ubiquinone oxidoreductase which catalyzes the oxidation of mitochondrial NADH does not translocate protons across the inner mitochondrial membrane. The protein is Internal alternative NAD(P)H-ubiquinone oxidoreductase A1, mitochondrial (NDA1) of Solanum tuberosum (Potato).